A 459-amino-acid polypeptide reads, in one-letter code: MKKDKKRNKIPIDNYPIQTLVNMSLNPSRPSSSELVELHVFYVPEGSWNYKLNTISTEVVNKFISAGFLRVSPQLTLRALRERLGEFLGEDAIAEKFLFLKCIGNNLAVVKEKQESELKLKSFAPPYALQPELYLLPVMDHLGNVYSPSTVILDERQTNNGVNEADGTIHRPISVTLFKEELGRDPSLLENTLKELPNKNQEEAGGKATAEKSQIAKNQIGNSELPGSLEDSNNDCFGTKKSQCLWENEDDTAISRRQDNQTAEKEYITLPDHPSLPCQPVLSSGITDISLLQTEREKIIKQMKQVKEERRYLERNREELVKTVEKLFEQSKLKRYHAYNGWKKKYLETKKVTASMEEVLTKLREDLELYYKKLLMQLEAREIKMRPKNLANITDSKNYLIIQITEVQHAIDQLKRKLDTDKMKLIVEVKMRKQAVSDLRTLKTELAQKKKIIHLYNLN.

Residues 193-205 (LKELPNKNQEEAG) are compositionally biased toward basic and acidic residues. Residues 193–213 (LKELPNKNQEEAGGKATAEKS) form a disordered region. Coiled-coil stretches lie at residues 287–374 (TDIS…YKKL) and 400–453 (LIIQ…KKII).

In terms of assembly, interacts with IFT20.

It is found in the cytoplasmic vesicle. The protein resides in the secretory vesicle. It localises to the acrosome. The sequence is that of Spermatogenesis-associated protein 1 (SPATA1) from Homo sapiens (Human).